Consider the following 197-residue polypeptide: LexA repressor (197 aa).

The segment at residues 28–47 is a DNA-binding region (H-T-H motif); the sequence is VREIARRFRITPRGALLHLI. Catalysis depends on for autocatalytic cleavage activity residues S119 and K156.

The protein belongs to the peptidase S24 family. Homodimer.

The enzyme catalyses Hydrolysis of Ala-|-Gly bond in repressor LexA.. Its function is as follows. Represses a number of genes involved in the response to DNA damage (SOS response), including recA and lexA. In the presence of single-stranded DNA, RecA interacts with LexA causing an autocatalytic cleavage which disrupts the DNA-binding part of LexA, leading to derepression of the SOS regulon and eventually DNA repair. In Thermotoga sp. (strain RQ2), this protein is LexA repressor.